Consider the following 833-residue polypeptide: Leucine--tRNA ligase (833 aa).

The 'HIGH' region signature appears at 41 to 52 (PYPSGVGLHVGH). The 'KMSKS' region motif lies at 610-614 (KMSKS). Residue lysine 613 coordinates ATP.

The protein belongs to the class-I aminoacyl-tRNA synthetase family.

The protein localises to the cytoplasm. It carries out the reaction tRNA(Leu) + L-leucine + ATP = L-leucyl-tRNA(Leu) + AMP + diphosphate. This is Leucine--tRNA ligase from Streptococcus pneumoniae serotype 2 (strain D39 / NCTC 7466).